A 179-amino-acid polypeptide reads, in one-letter code: Large ribosomal subunit protein uL6 (179 aa).

The protein belongs to the universal ribosomal protein uL6 family. As to quaternary structure, part of the 50S ribosomal subunit.

In terms of biological role, this protein binds to the 23S rRNA, and is important in its secondary structure. It is located near the subunit interface in the base of the L7/L12 stalk, and near the tRNA binding site of the peptidyltransferase center. The chain is Large ribosomal subunit protein uL6 from Bifidobacterium adolescentis (strain ATCC 15703 / DSM 20083 / NCTC 11814 / E194a).